Consider the following 234-residue polypeptide: Phosphoribosylaminoimidazole-succinocarboxamide synthase (234 aa).

This sequence belongs to the SAICAR synthetase family.

It catalyses the reaction 5-amino-1-(5-phospho-D-ribosyl)imidazole-4-carboxylate + L-aspartate + ATP = (2S)-2-[5-amino-1-(5-phospho-beta-D-ribosyl)imidazole-4-carboxamido]succinate + ADP + phosphate + 2 H(+). Its pathway is purine metabolism; IMP biosynthesis via de novo pathway; 5-amino-1-(5-phospho-D-ribosyl)imidazole-4-carboxamide from 5-amino-1-(5-phospho-D-ribosyl)imidazole-4-carboxylate: step 1/2. This is Phosphoribosylaminoimidazole-succinocarboxamide synthase from Streptococcus uberis (strain ATCC BAA-854 / 0140J).